Here is a 320-residue protein sequence, read N- to C-terminus: ATP-dependent 6-phosphofructokinase (320 aa).

Position 12 (glycine 12) interacts with ATP. Position 22-26 (22-26 (RGVVR)) interacts with ADP. ATP-binding positions include 73 to 74 (RF) and 103 to 106 (GDGS). Aspartate 104 provides a ligand contact to Mg(2+). Residue 126-128 (TID) participates in substrate binding. The active-site Proton acceptor is aspartate 128. An ADP-binding site is contributed by arginine 155. Substrate contacts are provided by residues arginine 163 and 170-172 (MGR). ADP-binding positions include 186–188 (GCE), lysine 212, and 214–216 (KKH). Residues glutamate 223, arginine 244, and 250–253 (HIQR) each bind substrate.

The protein belongs to the phosphofructokinase type A (PFKA) family. ATP-dependent PFK group I subfamily. Prokaryotic clade 'B1' sub-subfamily. In terms of assembly, homotetramer. It depends on Mg(2+) as a cofactor.

It localises to the cytoplasm. It carries out the reaction beta-D-fructose 6-phosphate + ATP = beta-D-fructose 1,6-bisphosphate + ADP + H(+). It functions in the pathway carbohydrate degradation; glycolysis; D-glyceraldehyde 3-phosphate and glycerone phosphate from D-glucose: step 3/4. Its activity is regulated as follows. Allosterically activated by ADP and other diphosphonucleosides, and allosterically inhibited by phosphoenolpyruvate. In terms of biological role, catalyzes the phosphorylation of D-fructose 6-phosphate to fructose 1,6-bisphosphate by ATP, the first committing step of glycolysis. The polypeptide is ATP-dependent 6-phosphofructokinase (Vibrio cholerae serotype O1 (strain ATCC 39315 / El Tor Inaba N16961)).